A 305-amino-acid polypeptide reads, in one-letter code: tRNA uridine(34) hydroxylase (305 aa).

Positions 124–219 constitute a Rhodanese domain; sequence QDEETLVVDT…YLETIPKEES (96 aa). Cys179 acts as the Cysteine persulfide intermediate in catalysis.

This sequence belongs to the TrhO family.

The enzyme catalyses uridine(34) in tRNA + AH2 + O2 = 5-hydroxyuridine(34) in tRNA + A + H2O. Catalyzes oxygen-dependent 5-hydroxyuridine (ho5U) modification at position 34 in tRNAs. The protein is tRNA uridine(34) hydroxylase of Bartonella bacilliformis (strain ATCC 35685 / KC583 / Herrer 020/F12,63).